The primary structure comprises 460 residues: Cysteine--tRNA ligase (460 aa).

Cysteine 27 provides a ligand contact to Zn(2+). The 'HIGH' region motif lies at 29 to 39 (PTVYDLIHVGN). Residues cysteine 207, histidine 232, and glutamate 236 each contribute to the Zn(2+) site. The 'KMSKS' region signature appears at 264–268 (KMSKS). Position 267 (lysine 267) interacts with ATP.

Belongs to the class-I aminoacyl-tRNA synthetase family. Monomer. Requires Zn(2+) as cofactor.

The protein resides in the cytoplasm. The catalysed reaction is tRNA(Cys) + L-cysteine + ATP = L-cysteinyl-tRNA(Cys) + AMP + diphosphate. This chain is Cysteine--tRNA ligase, found in Thermotoga petrophila (strain ATCC BAA-488 / DSM 13995 / JCM 10881 / RKU-1).